Reading from the N-terminus, the 333-residue chain is NADH-quinone oxidoreductase subunit H (333 aa).

8 helical membrane passes run 15–35, 88–108, 117–137, 159–179, 191–211, 239–259, 274–296, and 313–333; these read FFIF…FVTY, FILA…VIPF, IGVG…GVVT, ISYE…AGSL, VWYI…AVAE, WAFF…LITV, IPGA…WFRV, and VLLP…ELFF.

Belongs to the complex I subunit 1 family. As to quaternary structure, NDH-1 is composed of 14 different subunits. Subunits NuoA, H, J, K, L, M, N constitute the membrane sector of the complex.

It is found in the cell membrane. It carries out the reaction a quinone + NADH + 5 H(+)(in) = a quinol + NAD(+) + 4 H(+)(out). In terms of biological role, NDH-1 shuttles electrons from NADH, via FMN and iron-sulfur (Fe-S) centers, to quinones in the respiratory chain. The immediate electron acceptor for the enzyme in this species is believed to be ubiquinone. Couples the redox reaction to proton translocation (for every two electrons transferred, four hydrogen ions are translocated across the cytoplasmic membrane), and thus conserves the redox energy in a proton gradient. This subunit may bind ubiquinone. The sequence is that of NADH-quinone oxidoreductase subunit H from Bacillus cereus (strain G9842).